The chain runs to 341 residues: 2-keto-4-carboxy-3-hexenedioate hydratase (341 aa).

Residues histidine 8 and histidine 10 each contribute to the Zn(2+) site. Position 71 to 73 (71 to 73 (RAS)) interacts with substrate. Residue histidine 178 coordinates Zn(2+). Residues tyrosine 194 and histidine 223 each coordinate substrate. Glutamate 284 functions as the Proton donor/acceptor in the catalytic mechanism. Arginine 290 contributes to the substrate binding site.

It belongs to the metallo-dependent hydrolases superfamily. In terms of assembly, homodimer. Zn(2+) is required as a cofactor.

It catalyses the reaction (3Z)-2-oxo-4-carboxy-3-hexenedioate + H2O = (2S)-2-hydroxy-4-oxobutane-1,2,4-tricarboxylate. It participates in secondary metabolite metabolism; lignin degradation. In terms of biological role, contributes to the degradation of lignin at the level of the protocatechuate 4,5-cleavage pathway. Catalyzes the hydration of the double bond of (3Z)-2-keto-4-carboxy-3-hexenedioate (KCH) to (4S)-4-carboxy-4-hydroxy-2-oxoadipate (CHA, also named (2S)-2-hydroxy-4-oxobutane-1,2,4-tricarboxylate). Is involved in the catabolism of both vanillate and syringate. In Sphingobium sp. (strain NBRC 103272 / SYK-6), this protein is 2-keto-4-carboxy-3-hexenedioate hydratase.